Here is a 119-residue protein sequence, read N- to C-terminus: Immunoglobulin heavy variable 3-49 (119 aa).

Positions 1-19 (MEFGLSWVFLVAILKGVQC) are cleaved as a signal peptide. The interval 20 to 44 (EVQLVESGGGLVQPGRSLRLSCTAS) is framework-1. Residues 20–119 (EVQLVESGGG…EDTAVYYCTR (100 aa)) enclose the Ig-like domain. A disulfide bridge connects residues Cys41 and Cys117. Positions 45–52 (GFTFGDYA) are complementarity-determining-1. The interval 53–69 (MSWVRQAPGKGLEWVGF) is framework-2. Residues 70–79 (IRSKAYGGTT) form a complementarity-determining-2 region. Residues 80–117 (EYAASVKGRFTISRDDSKSIAYLQMNSLKTEDTAVYYC) form a framework-3 region. Residues 118–119 (TR) form a complementarity-determining-3 region.

In terms of assembly, immunoglobulins are composed of two identical heavy chains and two identical light chains; disulfide-linked.

It is found in the secreted. The protein resides in the cell membrane. V region of the variable domain of immunoglobulin heavy chains that participates in the antigen recognition. Immunoglobulins, also known as antibodies, are membrane-bound or secreted glycoproteins produced by B lymphocytes. In the recognition phase of humoral immunity, the membrane-bound immunoglobulins serve as receptors which, upon binding of a specific antigen, trigger the clonal expansion and differentiation of B lymphocytes into immunoglobulins-secreting plasma cells. Secreted immunoglobulins mediate the effector phase of humoral immunity, which results in the elimination of bound antigens. The antigen binding site is formed by the variable domain of one heavy chain, together with that of its associated light chain. Thus, each immunoglobulin has two antigen binding sites with remarkable affinity for a particular antigen. The variable domains are assembled by a process called V-(D)-J rearrangement and can then be subjected to somatic hypermutations which, after exposure to antigen and selection, allow affinity maturation for a particular antigen. In Homo sapiens (Human), this protein is Immunoglobulin heavy variable 3-49.